The primary structure comprises 298 residues: Lipoyl synthase (298 aa).

The [4Fe-4S] cluster site is built by Cys40, Cys45, Cys51, Cys67, Cys71, Cys74, and Ser280. In terms of domain architecture, Radical SAM core spans 53–269 (AVRRTATFMI…KEIALSKGFS (217 aa)).

It belongs to the radical SAM superfamily. Lipoyl synthase family. The cofactor is [4Fe-4S] cluster.

Its subcellular location is the cytoplasm. The catalysed reaction is [[Fe-S] cluster scaffold protein carrying a second [4Fe-4S](2+) cluster] + N(6)-octanoyl-L-lysyl-[protein] + 2 oxidized [2Fe-2S]-[ferredoxin] + 2 S-adenosyl-L-methionine + 4 H(+) = [[Fe-S] cluster scaffold protein] + N(6)-[(R)-dihydrolipoyl]-L-lysyl-[protein] + 4 Fe(3+) + 2 hydrogen sulfide + 2 5'-deoxyadenosine + 2 L-methionine + 2 reduced [2Fe-2S]-[ferredoxin]. The protein operates within protein modification; protein lipoylation via endogenous pathway; protein N(6)-(lipoyl)lysine from octanoyl-[acyl-carrier-protein]. Its function is as follows. Catalyzes the radical-mediated insertion of two sulfur atoms into the C-6 and C-8 positions of the octanoyl moiety bound to the lipoyl domains of lipoate-dependent enzymes, thereby converting the octanoylated domains into lipoylated derivatives. This Geobacillus kaustophilus (strain HTA426) protein is Lipoyl synthase.